We begin with the raw amino-acid sequence, 552 residues long: Iduronate 2-sulfatase (552 aa).

The first 29 residues, 1–29 (MSPPPPPPIWRQLSFSLLLGSFCIALESA), serve as a signal peptide directing secretion. A propeptide spanning residues 30-35 (AQGNSA) is cleaved from the precursor. Residues Asp47, Asp48, and Cys86 each coordinate Ca(2+). The Nucleophile role is filled by Cys86. At Cys86 the chain carries 3-oxoalanine (Cys). Asn117 carries an N-linked (GlcNAc...) asparagine glycan. His140 is a catalytic residue. Asn146 carries an N-linked (GlcNAc...) asparagine glycan. The cysteines at positions 173 and 186 are disulfide-linked. N-linked (GlcNAc...) asparagine glycans are attached at residues Asn248 and Asn282. The Ca(2+) site is built by Asp336 and His337. The cysteines at positions 424 and 434 are disulfide-linked. Residues Asn515 and Asn539 are each glycosylated (N-linked (GlcNAc...) asparagine).

It belongs to the sulfatase family. As to quaternary structure, monomer. The 58-kDa mature form is composed of two chains resulting from proteolitic processing, the 42-kDa chain and the 14-kDa chain that remain stably associated and form the 58-kDa intermediate form which is enzymatically active. It depends on Ca(2+) as a cofactor. Synthesized as a 75-kDa precursor form in the endoplasmic reticulum (ER), and then processed by proteolytic cleavage through various intermediates to yield a 55-kDa mature form, with the release of an 18 kDa polypeptide. In terms of processing, the conversion to 3-oxoalanine (also known as C-formylglycine, FGly), of a serine or cysteine residue in prokaryotes and of a cysteine residue in eukaryotes, is critical for catalytic activity. In terms of tissue distribution, found to be expressed in alpha and beta pancreatic cells.

It localises to the lysosome. It carries out the reaction Hydrolysis of the 2-sulfate groups of the L-iduronate 2-sulfate units of dermatan sulfate, heparan sulfate and heparin.. Functionally, lysosomal enzyme involved in the degradation pathway of dermatan sulfate and heparan sulfate. This chain is Iduronate 2-sulfatase (Ids), found in Mus musculus (Mouse).